We begin with the raw amino-acid sequence, 241 residues long: Carboxy-S-adenosyl-L-methionine synthase (241 aa).

S-adenosyl-L-methionine-binding positions include Y38, 63–65 (GCS), 88–89 (DN), 116–117 (DI), N131, and R198.

This sequence belongs to the class I-like SAM-binding methyltransferase superfamily. Cx-SAM synthase family. As to quaternary structure, homodimer.

It catalyses the reaction prephenate + S-adenosyl-L-methionine = carboxy-S-adenosyl-L-methionine + 3-phenylpyruvate + H2O. In terms of biological role, catalyzes the conversion of S-adenosyl-L-methionine (SAM) to carboxy-S-adenosyl-L-methionine (Cx-SAM). The chain is Carboxy-S-adenosyl-L-methionine synthase from Histophilus somni (strain 129Pt) (Haemophilus somnus).